The chain runs to 421 residues: UDP-N-acetylglucosamine 1-carboxyvinyltransferase (421 aa).

A phosphoenolpyruvate-binding site is contributed by 22–23 (KN). A UDP-N-acetyl-alpha-D-glucosamine-binding site is contributed by Arg93. Catalysis depends on Cys117, which acts as the Proton donor. Cys117 carries the post-translational modification 2-(S-cysteinyl)pyruvic acid O-phosphothioketal. Residues 122-126 (RPVDL), Asp308, and Ile330 each bind UDP-N-acetyl-alpha-D-glucosamine.

The protein belongs to the EPSP synthase family. MurA subfamily.

The protein localises to the cytoplasm. It carries out the reaction phosphoenolpyruvate + UDP-N-acetyl-alpha-D-glucosamine = UDP-N-acetyl-3-O-(1-carboxyvinyl)-alpha-D-glucosamine + phosphate. Its pathway is cell wall biogenesis; peptidoglycan biosynthesis. Cell wall formation. Adds enolpyruvyl to UDP-N-acetylglucosamine. The sequence is that of UDP-N-acetylglucosamine 1-carboxyvinyltransferase from Pseudomonas putida (strain GB-1).